A 468-amino-acid polypeptide reads, in one-letter code: Malate-2H(+)/Na(+)-lactate antiporter (468 aa).

12 consecutive transmembrane segments (helical) span residues 9–29 (LFEI…FTVF), 30–50 (LDLP…LLGI), 73–93 (AVLI…GGVV), 96–116 (LIYY…TLII), 136–156 (IAMI…AGAI), 192–212 (LYLS…VGFM), 233–253 (TFDI…LLAM), 258–278 (MPVI…FQGM), 309–329 (IVGM…GGLL), 357–377 (LIVA…LILT), 405–425 (LTSG…ILGV), and 428–448 (FSYL…IIYG).

It belongs to the NhaC Na(+)/H(+) (TC 2.A.35) antiporter family.

Its subcellular location is the cell membrane. In terms of biological role, couples proton uptake and Na(+) efflux to the substrate-product malate/lactate antiport, in an electroneutral malate-2H(+)/Na(+)-lactate exchange. Plays a role in supporting growth to high density on malate at reduced protonmotive force. The sequence is that of Malate-2H(+)/Na(+)-lactate antiporter (mleN) from Bacillus subtilis (strain 168).